An 89-amino-acid polypeptide reads, in one-letter code: Small cysteine-rich protein 1 (89 aa).

Residues 1–20 (MDVRFRLCLFLVILVIVANA) form the signal peptide. Residues 21–27 (NVIKEPE) constitute a propeptide that is removed on maturation.

The protein belongs to the Cnidaria small cysteine-rich protein (SCRiP) family. gamma subfamily. Contains 4 disulfide bonds.

Its subcellular location is the secreted. The protein localises to the nematocyst. Induces neurotoxic symptoms on zebrafish. Has also been claimed to be implied in calcification, but tests on homolog proteins suggest that proteins of this family have a neurotoxic function and not a calcification function. The protein is Small cysteine-rich protein 1 of Acropora millepora (Staghorn coral).